Here is a 103-residue protein sequence, read N- to C-terminus: SLC35A4 upstream open reading frame protein (103 aa).

The chain crosses the membrane as a helical span at residues 62 to 84 (ASAVLGFAVGTCTGIYAAQAYAV).

Its subcellular location is the mitochondrion inner membrane. Its function is as follows. Required to maintain cellular respiration. The polypeptide is SLC35A4 upstream open reading frame protein (Homo sapiens (Human)).